The primary structure comprises 122 residues: Small ribosomal subunit protein uS13 (122 aa).

The disordered stretch occupies residues 96–122 (LPVHGQRTKTNARTRKGPARTVAGKKK).

It belongs to the universal ribosomal protein uS13 family. As to quaternary structure, part of the 30S ribosomal subunit. Forms a loose heterodimer with protein S19. Forms two bridges to the 50S subunit in the 70S ribosome.

Located at the top of the head of the 30S subunit, it contacts several helices of the 16S rRNA. In the 70S ribosome it contacts the 23S rRNA (bridge B1a) and protein L5 of the 50S subunit (bridge B1b), connecting the 2 subunits; these bridges are implicated in subunit movement. Contacts the tRNAs in the A and P-sites. In Geotalea daltonii (strain DSM 22248 / JCM 15807 / FRC-32) (Geobacter daltonii), this protein is Small ribosomal subunit protein uS13.